The primary structure comprises 306 residues: Ribonuclease Z (306 aa).

Residues H63, H65, D67, H68, H141, D211, and H269 each coordinate Zn(2+). Residue D67 is the Proton acceptor of the active site.

This sequence belongs to the RNase Z family. Homodimer. It depends on Zn(2+) as a cofactor.

It catalyses the reaction Endonucleolytic cleavage of RNA, removing extra 3' nucleotides from tRNA precursor, generating 3' termini of tRNAs. A 3'-hydroxy group is left at the tRNA terminus and a 5'-phosphoryl group is left at the trailer molecule.. In terms of biological role, zinc phosphodiesterase, which displays some tRNA 3'-processing endonuclease activity. Probably involved in tRNA maturation, by removing a 3'-trailer from precursor tRNA. The chain is Ribonuclease Z from Staphylococcus epidermidis (strain ATCC 12228 / FDA PCI 1200).